We begin with the raw amino-acid sequence, 252 residues long: MLTKRIIPCLDVDHGRVKKGINFVQLKDVGDPVAIAKAYQEQGADELVFLDITATNEARGTLVQTVEAVANQVFMPLTVGGGIQSVADMHALLRAGADKVSLNSAAVADPSLLTAGAEKFGRQAIVAAIDTRWQADQNRYQVTVNGGRTPVDLDAITWAKQAVAAGAGELLVTSMDADGTESGFDLRLYQQLTAAVQVPIIASGGAGSTADFVQLFTQTTVSAGLAASIFHFGELTVPQVKTALKQAKVAVR.

Residues D11 and D130 contribute to the active site.

This sequence belongs to the HisA/HisF family. In terms of assembly, heterodimer of HisH and HisF.

The protein localises to the cytoplasm. The enzyme catalyses 5-[(5-phospho-1-deoxy-D-ribulos-1-ylimino)methylamino]-1-(5-phospho-beta-D-ribosyl)imidazole-4-carboxamide + L-glutamine = D-erythro-1-(imidazol-4-yl)glycerol 3-phosphate + 5-amino-1-(5-phospho-beta-D-ribosyl)imidazole-4-carboxamide + L-glutamate + H(+). It participates in amino-acid biosynthesis; L-histidine biosynthesis; L-histidine from 5-phospho-alpha-D-ribose 1-diphosphate: step 5/9. Functionally, IGPS catalyzes the conversion of PRFAR and glutamine to IGP, AICAR and glutamate. The HisF subunit catalyzes the cyclization activity that produces IGP and AICAR from PRFAR using the ammonia provided by the HisH subunit. This chain is Imidazole glycerol phosphate synthase subunit HisF, found in Lacticaseibacillus paracasei (strain ATCC 334 / BCRC 17002 / CCUG 31169 / CIP 107868 / KCTC 3260 / NRRL B-441) (Lactobacillus paracasei).